A 156-amino-acid polypeptide reads, in one-letter code: Large ribosomal subunit protein uL15 (156 aa).

Basic and acidic residues predominate over residues 1–13 (MKLNEIKDNEGAT). Residues 1–39 (MKLNEIKDNEGATKNRKRLGRGIGSGSGKTAGRGVKGQK) form a disordered region. The segment covering 21 to 35 (RGIGSGSGKTAGRGV) has biased composition (gly residues).

It belongs to the universal ribosomal protein uL15 family. In terms of assembly, part of the 50S ribosomal subunit.

In terms of biological role, binds to the 23S rRNA. The protein is Large ribosomal subunit protein uL15 of Rhizobium meliloti (strain 1021) (Ensifer meliloti).